The following is a 397-amino-acid chain: Leucine carboxyl methyltransferase 1 (397 aa).

Residues 17–61 are disordered; sequence AIQTPPPTDPNAAPAHRPAPRPALGRCRPPHRRRRRLRPPVRPPL. The segment covering 26–43 has biased composition (low complexity); sequence PNAAPAHRPAPRPALGRC. A compositionally biased stretch (basic residues) spans 44–55; that stretch reads RPPHRRRRRLRP. S-adenosyl-L-methionine-binding positions include arginine 119, glycine 142, aspartate 168, 224-225, and glutamate 259; that span reads DL.

This sequence belongs to the methyltransferase superfamily. LCMT family.

It catalyses the reaction [phosphatase 2A protein]-C-terminal L-leucine + S-adenosyl-L-methionine = [phosphatase 2A protein]-C-terminal L-leucine methyl ester + S-adenosyl-L-homocysteine. In terms of biological role, methylates the carboxyl group of the C-terminal leucine residue of protein phosphatase 2A catalytic subunits to form alpha-leucine ester residues. The polypeptide is Leucine carboxyl methyltransferase 1 (PPM1) (Cryptococcus neoformans var. neoformans serotype D (strain B-3501A) (Filobasidiella neoformans)).